A 530-amino-acid chain; its full sequence is Estrogen receptor beta (530 aa).

The modulating stretch occupies residues 1-148 (MEIKNSPSSL…SPNAKRDAHF (148 aa)). Serine 61 is subject to Phosphoserine; alternate. The O-linked (GlcNAc) serine; alternate glycan is linked to serine 61. Residues serine 87 and serine 105 each carry the phosphoserine; by MAPK modification. NR C4-type zinc fingers lie at residues 149–169 (CPVC…CEGC) and 185–209 (CPAT…LRKC). Positions 149–214 (CPVCSDYASG…RLRKCYEVGM (66 aa)) form a DNA-binding region, nuclear receptor. An NR LBD domain is found at 264-498 (SPEQLVLTLL…DLLLEMLNAH (235 aa)). Positions 506-515 (SISGSECSST) are enriched in low complexity. Residues 506 to 530 (SISGSECSSTEDSKNKESSQNLQSQ) form a disordered region.

The protein belongs to the nuclear hormone receptor family. NR3 subfamily. As to quaternary structure, binds DNA as a homodimer. Can form a heterodimer with ESR1. Interacts with NCOA1, NCOA3, NCOA5 and NCOA6 coactivators, leading to a strong increase of transcription of target genes. Interacts with UBE1C and AKAP13. Interacts with DNTTIP2. Interacts with CCDC62 in the presence of estradiol/E2; this interaction seems to enhance the transcription of target genes. Interacts with PRMT2. Interacts with CCAR2 (via N-terminus) in a ligand-independent manner. Interacts with DNAAF4. Interacts with RBM39, in the presence of estradiol (E2). Interacts with STUB1/CHIP. In terms of processing, phosphorylation at Ser-87 and Ser-105 recruits NCOA1. In terms of tissue distribution, expressed in the CA1 region of the hippocampus, expression decreases with age (at protein level). Expressed in prostate, ovary, lung, liver, kidney, fat, bone, brain, uterus and testis.

It is found in the nucleus. Functionally, nuclear hormone receptor. Binds estrogens with an affinity similar to that of ESR1/ER-alpha, and activates expression of reporter genes containing estrogen response elements (ERE) in an estrogen-dependent manner. Its function is as follows. Lacks ligand binding affinity and suppresses ESR1/ER-alpha and ESR2 isoform 1/ER-beta1 mediated transcriptional activation and may act as a dominant negative regulator of estrogen action. Unable to bind DNA and activate transcription due to the truncation of the DNA binding domain. This is Estrogen receptor beta (Esr2) from Rattus norvegicus (Rat).